A 226-amino-acid polypeptide reads, in one-letter code: MSKLLTESDSLKVIRRILEGSPKRRFNEAVDLVVVLRGIDLKRDPNAKINEVVELPHSPRNRKTKVAVIGKGEFLSKAKEAGADRVLEPEEIEAIAANKRALKKLANEYDFFIAQADVLPKIVKYIGPVLGPRNKMPINLPAMAVSQLPDLIEKLRRSVRIRTKDQPIIHTKVGSRDMKPEEIVENIRAVLSAIERKYEDPSKISRVYVKTTMGPAEELPLAAGRR.

The protein belongs to the universal ribosomal protein uL1 family. In terms of assembly, part of the 50S ribosomal subunit.

Binds directly to 23S rRNA. Probably involved in E site tRNA release. Functionally, protein L1 is also a translational repressor protein, it controls the translation of its operon by binding to its mRNA. The sequence is that of Large ribosomal subunit protein uL1 from Korarchaeum cryptofilum (strain OPF8).